The chain runs to 1438 residues: DNA polymerase III PolC-type (1438 aa).

Residues 422-578 (YVVFDVETTG…YDTEATAYIF (157 aa)) enclose the Exonuclease domain.

This sequence belongs to the DNA polymerase type-C family. PolC subfamily.

It is found in the cytoplasm. It catalyses the reaction DNA(n) + a 2'-deoxyribonucleoside 5'-triphosphate = DNA(n+1) + diphosphate. Its function is as follows. Required for replicative DNA synthesis. This DNA polymerase also exhibits 3' to 5' exonuclease activity. This is DNA polymerase III PolC-type from Staphylococcus aureus (strain bovine RF122 / ET3-1).